We begin with the raw amino-acid sequence, 360 residues long: MKPSMIKKLATLSERLDELNRLLSSEDVTNDIDNYRKITREHAEITPIVEQFRAYEQAEIDIKEAQAMLADPEMKEFAQEETEAGKQKLDDIEKQLQKLLLPKDPNDERNIFLEIRAGTGGDESALFAGDLFRMYSRYAERQGWKVEIVSANESEVGGYKEIIAKIEGFGAYSKLKFESGGHRVQRVPETETQGRIHTSACTVAVLPEVDEVSDVTINPADIRIDTFRASGAGGQHINKTDSAVRITHFPTGIVVECQDGRSQHSNKAQAMQVLAARIKAKQVDEQQSKIASERRSLIGSGDRSERIRTYNYPQGRITDHRINLTLYKIDAITEGDMDELINALAAEHQADLLATLGEDN.

Q235 is subject to N5-methylglutamine.

Belongs to the prokaryotic/mitochondrial release factor family. In terms of processing, methylated by PrmC. Methylation increases the termination efficiency of RF1.

Its subcellular location is the cytoplasm. Its function is as follows. Peptide chain release factor 1 directs the termination of translation in response to the peptide chain termination codons UAG and UAA. The sequence is that of Peptide chain release factor 1 from Methylobacillus flagellatus (strain ATCC 51484 / DSM 6875 / VKM B-1610 / KT).